The sequence spans 311 residues: Cell division protein ZipA (311 aa).

Residues Met1–Arg5 are Periplasmic-facing. The helical transmembrane segment at Phe6–Thr26 threads the bilayer. Topologically, residues Ser27–Ala311 are cytoplasmic. Residues Lys32–Glu54 are compositionally biased toward basic and acidic residues. Residues Lys32 to Glu60 form a disordered region.

This sequence belongs to the ZipA family. In terms of assembly, interacts with FtsZ via their C-terminal domains.

Its subcellular location is the cell inner membrane. In terms of biological role, essential cell division protein that stabilizes the FtsZ protofilaments by cross-linking them and that serves as a cytoplasmic membrane anchor for the Z ring. Also required for the recruitment to the septal ring of downstream cell division proteins. In Vibrio vulnificus (strain CMCP6), this protein is Cell division protein ZipA.